We begin with the raw amino-acid sequence, 983 residues long: Bifunctional glutamine synthetase adenylyltransferase/adenylyl-removing enzyme (983 aa).

The interval 1-468 (MTVENAKALF…KQYAALFEQA (468 aa)) is adenylyl removase. Positions 473-983 (AASGNLVFTG…FDKLVGHGAD (511 aa)) are adenylyl transferase.

Belongs to the GlnE family. Mg(2+) is required as a cofactor.

It catalyses the reaction [glutamine synthetase]-O(4)-(5'-adenylyl)-L-tyrosine + phosphate = [glutamine synthetase]-L-tyrosine + ADP. The enzyme catalyses [glutamine synthetase]-L-tyrosine + ATP = [glutamine synthetase]-O(4)-(5'-adenylyl)-L-tyrosine + diphosphate. Involved in the regulation of glutamine synthetase GlnA, a key enzyme in the process to assimilate ammonia. When cellular nitrogen levels are high, the C-terminal adenylyl transferase (AT) inactivates GlnA by covalent transfer of an adenylyl group from ATP to specific tyrosine residue of GlnA, thus reducing its activity. Conversely, when nitrogen levels are low, the N-terminal adenylyl removase (AR) activates GlnA by removing the adenylyl group by phosphorolysis, increasing its activity. The regulatory region of GlnE binds the signal transduction protein PII (GlnB) which indicates the nitrogen status of the cell. This chain is Bifunctional glutamine synthetase adenylyltransferase/adenylyl-removing enzyme, found in Brucella melitensis biotype 1 (strain ATCC 23456 / CCUG 17765 / NCTC 10094 / 16M).